The chain runs to 445 residues: Histone acetyltransferase ESA1 (445 aa).

S17 carries the post-translational modification Phosphoserine. A Tudor-knot domain is found at 22–74 (IIKCQCWVQKNDEERLAEILSINTRKAPPKFYVHYVNYNKRLDEWITTDRINL). Residues 88–114 (EDNKKQKKKKATNTSETPQDSLQDGVD) form a disordered region. The segment covering 99 to 109 (TNTSETPQDSL) has biased composition (polar residues). Positions 162–433 (ARVRNLNRII…IDPNRLIWKP (272 aa)) constitute an MYST-type HAT domain. The C2HC MYST-type; degenerate zinc-finger motif lies at 195 to 220 (IYIDDFTLQYFGSKKQYERYRKKCTL). The short motif at 245-266 (RTWCRNLCLLSKLFLDHKTLYY) is the ESA1-RPD3 motif element. The residue at position 262 (K262) is an N6-acetyllysine; by autocatalysis. Residues 303-307 (ACILT) and 312-318 (QRMGYGK) each bind acetyl-CoA. Residue E338 is the Proton donor/acceptor of the active site. Residue S342 participates in acetyl-CoA binding.

The protein belongs to the MYST (SAS/MOZ) family. Component of the NuA4 histone acetyltransferase complex composed of at least ACT1, ARP4, EAF3, EAF5, EAF6, EAF7, EPL1, ESA1, SWC4, TRA1, VID21, YAF9 and YNG2. The complex interacts with histones H4 (HHF1 and HHF2), H3 (HHT1 and HHT2) and H2A (HTA1 and HTA2). Post-translationally, autoacetylation at Lys-262 is required for proper function.

It carries out the reaction L-lysyl-[histone] + acetyl-CoA = N(6)-acetyl-L-lysyl-[histone] + CoA + H(+). It catalyses the reaction L-lysyl-[protein] + acetyl-CoA = N(6)-acetyl-L-lysyl-[protein] + CoA + H(+). The enzyme catalyses 2-hydroxyisobutanoyl-CoA + L-lysyl-[protein] = N(6)-(2-hydroxyisobutanoyl)-L-lysyl-[protein] + CoA + H(+). The catalysed reaction is (2E)-butenoyl-CoA + L-lysyl-[protein] = N(6)-(2E)-butenoyl-L-lysyl-[protein] + CoA + H(+). Catalytic component of the NuA4 histone acetyltransferase (HAT), a multiprotein complex involved in epigenetic transcriptional activation of selected genes principally by acetylation of nucleosomal histones H4, H3, H2B, H2A and H2A variant H2A.Z. Acetylates histone H4 to form H4K5ac, H4K8ac, H4K12ac and H4K16ac, histone H3 to form H3K14ac, histone H2B to form H2BK16ac, histone H2A to form H2AK4ac and H2AK7ac, and histone variant H2A.Z to form H2A.ZK14ac. Acetylation of histones gives a specific tag for epigenetic transcription initiation and elongation. Acetylation of histone H4 is essential for DNA double-strand break repair through homologous recombination. Involved in cell cycle progression. Recruitment to promoters depends on H3K4me. Also acetylates non-histone proteins, such as ATG3 and PAH1. Regulates autophagy by acetylating ATG3, controlling interaction the interaction between ATG3 and ATG8 and ATG8 lipidation. Acts as a regulator of fatty-acid-induced triacylglycerol synthesis by catalyzing acetylation of PAH1, thereby promoting the synthesis of diacylglycerol. In addition to protein acetyltransferase, can use different acyl-CoA substrates, such as 2-hydroxyisobutanoyl-CoA (2-hydroxyisobutyryl-CoA) or (2E)-butenoyl-CoA (crotonyl-CoA), and is able to mediate protein 2-hydroxyisobutyrylation and crotonylation, respectively. Catalyzes histone crotonylation. The polypeptide is Histone acetyltransferase ESA1 (Saccharomyces cerevisiae (strain ATCC 204508 / S288c) (Baker's yeast)).